A 440-amino-acid chain; its full sequence is Transposon Ty1-PR2 Gag polyprotein (440 aa).

Composition is skewed to polar residues over residues 1–10, 48–60, and 127–152; these read MESQQLSNYP, TKANSQQTTTPAS, and QSQFPQYPSSVGTPLSTPSPESGNTF. 3 disordered regions span residues 1-93, 126-173, and 352-440; these read MESQ…MMTQ, PQSQ…RPPP, and GSRN…PETY. Low complexity predominate over residues 153 to 165; it reads TDSSSADSDMTST. Residues 299–401 form an RNA-binding region; sequence NNGIHINNKV…NSKSKTARAH (103 aa). Positions 402-418 are enriched in low complexity; it reads NVSTSNNSPSTDNDSIS. Ser416 is modified (phosphoserine). Over residues 419 to 428 the composition is skewed to polar residues; sequence KSTTEPIQLN. Basic and acidic residues predominate over residues 429-440; that stretch reads NKHDLHLRPETY.

Homotrimer.

The protein localises to the cytoplasm. In terms of biological role, capsid protein (CA) is the structural component of the virus-like particle (VLP), forming the shell that encapsulates the retrotransposons dimeric RNA genome. The particles are assembled from trimer-clustered units and there are holes in the capsid shells that allow for the diffusion of macromolecules. CA also has nucleocapsid-like chaperone activity, promoting primer tRNA(i)-Met annealing to the multipartite primer-binding site (PBS), dimerization of Ty1 RNA and initiation of reverse transcription. The polypeptide is Transposon Ty1-PR2 Gag polyprotein (TY1A-PR2) (Saccharomyces cerevisiae (strain ATCC 204508 / S288c) (Baker's yeast)).